Here is a 398-residue protein sequence, read N- to C-terminus: Putative tyrosine-protein phosphatase C15H7.3 (398 aa).

Residues 1-15 are compositionally biased toward basic residues; sequence MERSQKSARKKKKTS. The interval 1–114 is disordered; it reads MERSQKSARK…EPWSEEEPAK (114 aa). Basic and acidic residues predominate over residues 18 to 40; it reads GNDRSIRSERKSKQKKPAGEKSQ. Basic residues predominate over residues 41–50; it reads KSRRTRKSRG. Over residues 55–73 the composition is skewed to polar residues; the sequence is GFTSRETIQPSSSGQSEGT. A compositionally biased stretch (basic and acidic residues) spans 74–114; sequence TRMDDQKDEKKDDKKEEKKEERKEEKKEEVKEPWSEEEPAK. A Tyrosine-protein phosphatase domain is found at 125 to 376; that stretch reads TNVGGTFKQT…GTVHRSMACW (252 aa).

This sequence belongs to the protein-tyrosine phosphatase family. Non-receptor class subfamily.

It carries out the reaction O-phospho-L-tyrosyl-[protein] + H2O = L-tyrosyl-[protein] + phosphate. The protein is Putative tyrosine-protein phosphatase C15H7.3 of Caenorhabditis elegans.